Consider the following 454-residue polypeptide: Exodeoxyribonuclease 7 large subunit (454 aa).

Residues 337-352 show a composition bias toward low complexity; it reads ANQRQQRASQRLRQQN. A disordered region spans residues 337–359; the sequence is ANQRQQRASQRLRQQNPQPRIHR.

The protein belongs to the XseA family. In terms of assembly, heterooligomer composed of large and small subunits.

It localises to the cytoplasm. The enzyme catalyses Exonucleolytic cleavage in either 5'- to 3'- or 3'- to 5'-direction to yield nucleoside 5'-phosphates.. Its function is as follows. Bidirectionally degrades single-stranded DNA into large acid-insoluble oligonucleotides, which are then degraded further into small acid-soluble oligonucleotides. The protein is Exodeoxyribonuclease 7 large subunit of Salmonella arizonae (strain ATCC BAA-731 / CDC346-86 / RSK2980).